Consider the following 484-residue polypeptide: Fork head protein homolog 1 (484 aa).

In terms of domain architecture, FHA spans 76-142 (VTIGRNTDSL…NGAKVNFRRI (67 aa)). A DNA-binding region (fork-head) is located at residues 302–393 (IKPPQSYASM…RRDFLNKWNA (92 aa)).

In terms of assembly, interacts (via FHA domain) with ECM30, GLN3, URE2, MPH1 AND FDO1. Interacts with the origin recognition complex (ORC) composed of ORC1 to ORC6.

The protein resides in the nucleus. The protein localises to the cytoplasm. Its subcellular location is the cytosol. Transcription factor that regulates the expression of the CLB2 cluster of genes during the G2/M phase of the mitotic cell cycle. The CLB2 cluster of genes includes mitotic regulators such as CLB1, CLB2, CDC5 and CDC20 as well as SWI5 and ACE2, transcription factors required for the subsequent temporal wave of cell cycle regulated gene expression in the M/G1 phase interval. Involved in HMRa silencing. FKH1 and FKH2 associate with the coding regions of active genes and influence, in opposing ways, transcriptional elongation and termination, and coordinate early transcription elongation and pre-mRNA processing. Both FKH1 and FKH2 play a role as regulators of lifespan in collaboration with the anaphase-promoting complex (APC), likely through combined regulation of stress response, genomic stability, and cell cycle regulation. FKH1 and FKH2 function also in controlling yeast cell morphology by preventing preudohyphal growth. Acts as a rate-limiting replication origin activator via its interaction with the origin recognition complex (ORC). Plays a transcription-independent role in recombination donor preference during mating-type switching through binding to the recombination enhancer (RE), a 700-bp cis-acting element that controls recombination along the left arm of chromosome III. This is Fork head protein homolog 1 from Saccharomyces cerevisiae (strain ATCC 204508 / S288c) (Baker's yeast).